Reading from the N-terminus, the 130-residue chain is Small ribosomal subunit protein uS11 (130 aa).

The protein belongs to the universal ribosomal protein uS11 family. As to quaternary structure, part of the 30S ribosomal subunit. Interacts with proteins S7 and S18. Binds to IF-3.

Functionally, located on the platform of the 30S subunit, it bridges several disparate RNA helices of the 16S rRNA. Forms part of the Shine-Dalgarno cleft in the 70S ribosome. The sequence is that of Small ribosomal subunit protein uS11 from Thiobacillus denitrificans (strain ATCC 25259 / T1).